Here is a 425-residue protein sequence, read N- to C-terminus: Serine--tRNA ligase (425 aa).

231 to 233 contributes to the L-serine binding site; the sequence is TAE. Residue 262–264 coordinates ATP; it reads RSE. Residue E285 participates in L-serine binding. An ATP-binding site is contributed by 349 to 352; the sequence is EISS. S385 serves as a coordination point for L-serine.

The protein belongs to the class-II aminoacyl-tRNA synthetase family. Type-1 seryl-tRNA synthetase subfamily. Homodimer. The tRNA molecule binds across the dimer.

The protein localises to the cytoplasm. The catalysed reaction is tRNA(Ser) + L-serine + ATP = L-seryl-tRNA(Ser) + AMP + diphosphate + H(+). It carries out the reaction tRNA(Sec) + L-serine + ATP = L-seryl-tRNA(Sec) + AMP + diphosphate + H(+). Its pathway is aminoacyl-tRNA biosynthesis; selenocysteinyl-tRNA(Sec) biosynthesis; L-seryl-tRNA(Sec) from L-serine and tRNA(Sec): step 1/1. In terms of biological role, catalyzes the attachment of serine to tRNA(Ser). Is also able to aminoacylate tRNA(Sec) with serine, to form the misacylated tRNA L-seryl-tRNA(Sec), which will be further converted into selenocysteinyl-tRNA(Sec). This is Serine--tRNA ligase from Bartonella bacilliformis (strain ATCC 35685 / KC583 / Herrer 020/F12,63).